The primary structure comprises 274 residues: Putative pyruvate, phosphate dikinase regulatory protein (274 aa).

153-160 (GISRTSKT) serves as a coordination point for ADP.

This sequence belongs to the pyruvate, phosphate/water dikinase regulatory protein family. PDRP subfamily.

It catalyses the reaction N(tele)-phospho-L-histidyl/L-threonyl-[pyruvate, phosphate dikinase] + ADP = N(tele)-phospho-L-histidyl/O-phospho-L-threonyl-[pyruvate, phosphate dikinase] + AMP + H(+). The catalysed reaction is N(tele)-phospho-L-histidyl/O-phospho-L-threonyl-[pyruvate, phosphate dikinase] + phosphate + H(+) = N(tele)-phospho-L-histidyl/L-threonyl-[pyruvate, phosphate dikinase] + diphosphate. Bifunctional serine/threonine kinase and phosphorylase involved in the regulation of the pyruvate, phosphate dikinase (PPDK) by catalyzing its phosphorylation/dephosphorylation. In Bartonella henselae (strain ATCC 49882 / DSM 28221 / CCUG 30454 / Houston 1) (Rochalimaea henselae), this protein is Putative pyruvate, phosphate dikinase regulatory protein.